A 215-amino-acid polypeptide reads, in one-letter code: Ras-related protein Rab-14 (215 aa).

Position 2 is an N-acetylalanine (A2). Positions 21, 22, 23, 24, 25, 26, 38, 39, 40, 42, and 43 each coordinate GTP. S25 provides a ligand contact to Mg(2+). Residues 42-47 (HTIGVE) carry the Switch 1 motif. Mg(2+) contacts are provided by T43 and D66. A Switch 2 motif is present at residues 68–77 (AGQERFRAVT). GTP is bound by residues G69, N124, K125, D127, A155, and K156. The disordered stretch occupies residues 188–215 (SGVQHKPSAPQGGRLTSEPQPQREGCGC). S-geranylgeranyl cysteine attachment occurs at residues C213 and C215. C215 carries the cysteine methyl ester modification.

It belongs to the small GTPase superfamily. Rab family. It depends on Mg(2+) as a cofactor.

The protein resides in the recycling endosome. It localises to the early endosome membrane. Its subcellular location is the golgi apparatus membrane. It is found in the golgi apparatus. The protein localises to the trans-Golgi network membrane. The protein resides in the cytoplasmic vesicle. It localises to the phagosome. The enzyme catalyses GTP + H2O = GDP + phosphate + H(+). Its activity is regulated as follows. Regulated by guanine nucleotide exchange factors (GEFs) including DENND6A and DENND6B which promote the exchange of bound GDP for free GTP. Regulated by GTPase activating proteins (GAPs) which increase the GTP hydrolysis activity. Inhibited by GDP dissociation inhibitors (GDIs) which prevent Rab-GDP dissociation. Functionally, the small GTPases Rab are key regulators of intracellular membrane trafficking, from the formation of transport vesicles to their fusion with membranes. Rabs cycle between an inactive GDP-bound form and an active GTP-bound form that is able to recruit to membranes different set of downstream effectors directly responsible for vesicle formation, movement, tethering and fusion. Involved in membrane trafficking between the Golgi complex and endosomes during early embryonic development. Regulates the Golgi to endosome transport of FGFR-containing vesicles during early development, a key process for developing basement membrane and epiblast and primitive endoderm lineages during early postimplantation development. May act by modulating the kinesin KIF16B-cargo association to endosomes. Regulates, together with its guanine nucleotide exchange factor DENND6A, the specific endocytic transport of ADAM10, N-cadherin/CDH2 shedding and cell-cell adhesion. Mediates endosomal tethering and fusion through the interaction with RUFY1 and RAB4B. Interaction with RAB11FIP1 may function in the process of neurite formation. In Gallus gallus (Chicken), this protein is Ras-related protein Rab-14 (RAB14).